The chain runs to 244 residues: 1-(5-phosphoribosyl)-5-[(5-phosphoribosylamino)methylideneamino] imidazole-4-carboxamide isomerase (244 aa).

Aspartate 9 acts as the Proton acceptor in catalysis. The active-site Proton donor is the aspartate 131.

Belongs to the HisA/HisF family.

It localises to the cytoplasm. It carries out the reaction 1-(5-phospho-beta-D-ribosyl)-5-[(5-phospho-beta-D-ribosylamino)methylideneamino]imidazole-4-carboxamide = 5-[(5-phospho-1-deoxy-D-ribulos-1-ylimino)methylamino]-1-(5-phospho-beta-D-ribosyl)imidazole-4-carboxamide. It functions in the pathway amino-acid biosynthesis; L-histidine biosynthesis; L-histidine from 5-phospho-alpha-D-ribose 1-diphosphate: step 4/9. This is 1-(5-phosphoribosyl)-5-[(5-phosphoribosylamino)methylideneamino] imidazole-4-carboxamide isomerase from Campylobacter jejuni subsp. jejuni serotype O:6 (strain 81116 / NCTC 11828).